A 67-amino-acid chain; its full sequence is Large ribosomal subunit protein bL35 (67 aa).

Positions 1–16 (MPKMKTKSGAKKRFRV) are enriched in basic residues. The disordered stretch occupies residues 1-24 (MPKMKTKSGAKKRFRVRPGGTVKR).

Belongs to the bacterial ribosomal protein bL35 family.

The polypeptide is Large ribosomal subunit protein bL35 (Polaromonas naphthalenivorans (strain CJ2)).